A 278-amino-acid chain; its full sequence is uncharacterized protein (278 aa).

Belongs to the manganese catalase family.

This is an uncharacterized protein from Bacillus subtilis (strain 168).